We begin with the raw amino-acid sequence, 514 residues long: MKKLKINYLFIGILTLLLAAALWPSIPWFGKTENHIAAIQARGVLRVSTIDSPLTYSVINGKKYGLDYELAQQFANYLGVKLKVTVRQNISQLFDDLDNGNADLLAAGLVYDSARVKNYQPGPMYYSVSQQLVYRVGQYRPRSLATVNENQLTIAPGHVVVNDLQRLKETKFPDLSWKVDDKKGSTTLLEEVISGKLDYTIADSVAISLFQRVHPELAVALDVTDEQPVTWFSRLDDDNTLSAALLDFFNSINEDGSLARIEEKYLGHGDDFDYVDTRSFLRAVDNVLPELEPLFKKYAKEIDWRLLAAISYQESHWDPLATSSTGVRGLMMLTKNTAQSLGLTDRTDAEQSISGGARYLEDMMAKVPETVPEDERIWFALAAYNMGYAHMLDARSLTVKTKGNPDSWTDVKQRLPLLSQKPYYSKLTYGYARGHEAYAYVENIRKYQISLVGYLQEKEKQEAEAMKLAQDYPAVSPEELNKTPFPLLSFLSQSSGYLTHSPSLLFTPQKKEEK.

The signal sequence occupies residues 1 to 30 (MKKLKINYLFIGILTLLLAAALWPSIPWFG). Positions 31–269 (KTENHIAAIQ…RIEEKYLGHG (239 aa)) are non-LT domain. Residues 270 to 514 (DDFDYVDTRS…LFTPQKKEEK (245 aa)) are LT domain. Glu-314 is an active-site residue.

The protein in the N-terminal section; belongs to the bacterial solute-binding protein 3 family. This sequence in the C-terminal section; belongs to the transglycosylase Slt family.

It is found in the cell outer membrane. It catalyses the reaction Exolytic cleavage of the (1-&gt;4)-beta-glycosidic linkage between N-acetylmuramic acid (MurNAc) and N-acetylglucosamine (GlcNAc) residues in peptidoglycan, from either the reducing or the non-reducing ends of the peptidoglycan chains, with concomitant formation of a 1,6-anhydrobond in the MurNAc residue.. In terms of biological role, murein-degrading enzyme that degrades murein glycan strands and insoluble, high-molecular weight murein sacculi, with the concomitant formation of a 1,6-anhydromuramoyl product. Lytic transglycosylases (LTs) play an integral role in the metabolism of the peptidoglycan (PG) sacculus. Their lytic action creates space within the PG sacculus to allow for its expansion as well as for the insertion of various structures such as secretion systems and flagella. The protein is Membrane-bound lytic murein transglycosylase F of Salmonella choleraesuis (strain SC-B67).